Reading from the N-terminus, the 260-residue chain is uncharacterized protein (260 aa).

An N-terminal signal peptide occupies residues 1-22 (MKSIKRIGLCISLLILIIFATS). A lipid anchor (N-palmitoyl cysteine) is attached at Cys23. A lipid anchor (S-diacylglycerol cysteine) is attached at Cys23.

It belongs to the staphylococcal tandem lipoprotein family.

It is found in the cell membrane. This is an uncharacterized protein from Staphylococcus aureus (strain N315).